The following is a 141-amino-acid chain: Large ribosomal subunit protein uL11 (141 aa).

Belongs to the universal ribosomal protein uL11 family. As to quaternary structure, part of the ribosomal stalk of the 50S ribosomal subunit. Interacts with L10 and the large rRNA to form the base of the stalk. L10 forms an elongated spine to which L12 dimers bind in a sequential fashion forming a multimeric L10(L12)X complex. One or more lysine residues are methylated.

Forms part of the ribosomal stalk which helps the ribosome interact with GTP-bound translation factors. This chain is Large ribosomal subunit protein uL11, found in Synechococcus sp. (strain WH7803).